The chain runs to 292 residues: Elongation factor Ts (292 aa).

Residues 82-85 (TDFV) form an involved in Mg(2+) ion dislocation from EF-Tu region.

This sequence belongs to the EF-Ts family.

It is found in the cytoplasm. Its function is as follows. Associates with the EF-Tu.GDP complex and induces the exchange of GDP to GTP. It remains bound to the aminoacyl-tRNA.EF-Tu.GTP complex up to the GTP hydrolysis stage on the ribosome. The sequence is that of Elongation factor Ts from Bordetella bronchiseptica (strain ATCC BAA-588 / NCTC 13252 / RB50) (Alcaligenes bronchisepticus).